We begin with the raw amino-acid sequence, 183 residues long: UPF0316 protein BcerKBAB4_3093 (183 aa).

A run of 3 helical transmembrane segments spans residues 6–26 (LIFV…ILLV), 32–52 (SAAG…GIVF), and 58–78 (WMNI…GGYI).

This sequence belongs to the UPF0316 family.

Its subcellular location is the cell membrane. In Bacillus mycoides (strain KBAB4) (Bacillus weihenstephanensis), this protein is UPF0316 protein BcerKBAB4_3093.